The primary structure comprises 320 residues: Glycerol-3-phosphate dehydrogenase [NAD(P)+] (320 aa).

4 residues coordinate NADPH: S14, F15, R35, and K109. Residues K109 and G137 each coordinate sn-glycerol 3-phosphate. A141 provides a ligand contact to NADPH. Residues K192, D248, S258, R259, and N260 each contribute to the sn-glycerol 3-phosphate site. The active-site Proton acceptor is K192. An NADPH-binding site is contributed by R259. L283 and E285 together coordinate NADPH.

It belongs to the NAD-dependent glycerol-3-phosphate dehydrogenase family.

It localises to the cytoplasm. It carries out the reaction sn-glycerol 3-phosphate + NAD(+) = dihydroxyacetone phosphate + NADH + H(+). It catalyses the reaction sn-glycerol 3-phosphate + NADP(+) = dihydroxyacetone phosphate + NADPH + H(+). It participates in membrane lipid metabolism; glycerophospholipid metabolism. Functionally, catalyzes the reduction of the glycolytic intermediate dihydroxyacetone phosphate (DHAP) to sn-glycerol 3-phosphate (G3P), the key precursor for phospholipid synthesis. This chain is Glycerol-3-phosphate dehydrogenase [NAD(P)+], found in Rickettsia typhi (strain ATCC VR-144 / Wilmington).